A 279-amino-acid polypeptide reads, in one-letter code: Uroplakin-3b (279 aa).

Positions 1–26 are cleaved as a signal peptide; it reads MGLPSRQPRLWLLLLVVLGWPQPCLT. Over 27–200 the chain is Lumenal; the sequence is LDLIPYTPRI…DTWPGRRSGD (174 aa). The N-linked (GlcNAc...) asparagine glycan is linked to N77. The chain crosses the membrane as a helical span at residues 201 to 221; the sequence is MIIITSILSSLAGLLLLAFLA. Topologically, residues 222–279 are cytoplasmic; it reads ASSVRFSSLWWPEEAPEQLRIGSFMGKRYMTHHIPPSEAATLPVGCEPGLERFPSLSP.

It belongs to the uroplakin-3 family. As to quaternary structure, heterodimer with uroplakin-1B (UPK1B). As to expression, expression is urothelium-specific.

The protein resides in the cell membrane. Its function is as follows. Component of the asymmetric unit membrane (AUM); a highly specialized biomembrane elaborated by terminally differentiated urothelial cells. May play an important role in AUM-cytoskeleton interaction in terminally differentiated urothelial cells. It also contributes to the formation of urothelial glycocalyx which may play an important role in preventing bacterial adherence. This is Uroplakin-3b (UPK3B) from Bos taurus (Bovine).